A 520-amino-acid polypeptide reads, in one-letter code: 2-isopropylmalate synthase (520 aa).

The Pyruvate carboxyltransferase domain maps to 5 to 267 (VIIFDTTLRD…HTNINHQEIY (263 aa)). Residues D14, H202, H204, and N238 each coordinate Mn(2+). The tract at residues 392-520 (RLDYFSVQSG…RLQQNNQEMV (129 aa)) is regulatory domain.

This sequence belongs to the alpha-IPM synthase/homocitrate synthase family. LeuA type 1 subfamily. In terms of assembly, homodimer. Mn(2+) serves as cofactor.

The protein localises to the cytoplasm. The enzyme catalyses 3-methyl-2-oxobutanoate + acetyl-CoA + H2O = (2S)-2-isopropylmalate + CoA + H(+). It participates in amino-acid biosynthesis; L-leucine biosynthesis; L-leucine from 3-methyl-2-oxobutanoate: step 1/4. In terms of biological role, catalyzes the condensation of the acetyl group of acetyl-CoA with 3-methyl-2-oxobutanoate (2-ketoisovalerate) to form 3-carboxy-3-hydroxy-4-methylpentanoate (2-isopropylmalate). This chain is 2-isopropylmalate synthase, found in Yersinia pseudotuberculosis serotype O:1b (strain IP 31758).